The primary structure comprises 91 residues: Acylphosphatase (91 aa).

An Acylphosphatase-like domain is found at 3 to 91 (CLKAVVKGKV…GNYGDFHIKY (89 aa)). Residues Arg18 and Asn36 contribute to the active site.

The protein belongs to the acylphosphatase family.

It catalyses the reaction an acyl phosphate + H2O = a carboxylate + phosphate + H(+). This is Acylphosphatase (acyP) from Dehalococcoides mccartyi (strain ATCC BAA-2266 / KCTC 15142 / 195) (Dehalococcoides ethenogenes (strain 195)).